A 436-amino-acid chain; its full sequence is 3-ketoacyl-CoA thiolase (436 aa).

Catalysis depends on Cys99, which acts as the Acyl-thioester intermediate. Residues His392 and Cys422 each act as proton acceptor in the active site.

The protein belongs to the thiolase-like superfamily. Thiolase family. As to quaternary structure, heterotetramer of two alpha chains (FadJ) and two beta chains (FadI).

Its subcellular location is the cytoplasm. The enzyme catalyses an acyl-CoA + acetyl-CoA = a 3-oxoacyl-CoA + CoA. Its pathway is lipid metabolism; fatty acid beta-oxidation. Functionally, catalyzes the final step of fatty acid oxidation in which acetyl-CoA is released and the CoA ester of a fatty acid two carbons shorter is formed. This is 3-ketoacyl-CoA thiolase from Escherichia coli O1:K1 / APEC.